A 362-amino-acid chain; its full sequence is Beta-ketoacyl-[acyl-carrier-protein] synthase III 2 (362 aa).

Residues Cys113 and His251 contribute to the active site. An ACP-binding region spans residues Gln252 to Arg256. Residue Asn281 is part of the active site.

The protein belongs to the thiolase-like superfamily. FabH family. In terms of assembly, homodimer.

It localises to the cytoplasm. The enzyme catalyses malonyl-[ACP] + acetyl-CoA + H(+) = 3-oxobutanoyl-[ACP] + CO2 + CoA. The protein operates within lipid metabolism; fatty acid biosynthesis. Catalyzes the condensation reaction of fatty acid synthesis by the addition to an acyl acceptor of two carbons from malonyl-ACP. Catalyzes the first condensation reaction which initiates fatty acid synthesis and may therefore play a role in governing the total rate of fatty acid production. Possesses both acetoacetyl-ACP synthase and acetyl transacylase activities. Its substrate specificity determines the biosynthesis of branched-chain and/or straight-chain of fatty acids. This Vibrio vulnificus (strain YJ016) protein is Beta-ketoacyl-[acyl-carrier-protein] synthase III 2.